Reading from the N-terminus, the 1120-residue chain is MRLLMSQEIMFKYIFPDLAAIQKESFKSFLLEGLSEVLDSFPIIVDPTGKLELQFFGKDYKLKFPRYSVRKAKSRDKTYSAQIYIPAKLTRRDIEVIKENISTSKDLSYFFNSQDINKKYRKRPVFIGDLPLMTNRGTFVISGTERIIINQIVRSPGVYYKKELDKNNKQIYSCSIISNRGSWLKFEIDSKAQIWAKIDKNHKVSAYIFLRSIGLNNEDIRKRLTKYNYLINSSLTYYKKEFSKDVNNVDIEKITEEEALVIVYSKLRPNEPATLAVAKQMLYTRFFDPKRYDLGAVGRHKINQKLNLKVPTHFRVLSPEDILVSLDYLLNIKEQNIGTFDDIDHLGNRRVRSVGELLQNQVRIGLNRLERIIRERMIICDLDSLSLSNLVNPKPLMASVREFFSSSQLSQFMDQTNPLSELTHKRRISALGPGGLNKDRAGFAVRDLHPSHYGRICPIETPEGPNAGLIGSLSIYAKVNRYGFIETPCYKVTDGQVLKKDKLYYITADQEDYLRIAPADISLDVNDFIQDKIIAVRYKQEFITATISQVDYMAVSPIQFISAATSLIPFLEHDDANRALMGSNMQRQAVPLLFPEKSIVGTGLEAKIAKDSGMTIISRTNGTVSYVSGTKIGIQNKEGYTIHYRLKKYYRSNQDTCINQRPIVWPGENIRIGQTIADGASTDGGEIALGRNIIVAYMPWEGYNYEDAFLISERLVYEDLYTSIHIERYELECRQTKLGSEEITRDIPNVSEASIGLLDKNGIISIGSWVDAGDILVGKVTPKGESDQLPEGKLLRAIFGEKARDVRDTSLRLPNATKGRVVNVKIFKRQKGDELPPGTNEIIRVYVAQKRKIQVGDKMAGRHGNKGIISRILSLQDMPFLPDGTPVDIILNPLGVPSRMNVGQLFECLLGLAGEYSSKRFKIIPFDEMYGSEASRALVYNKLKQASSMNDKSWLFNALHPGKVMLVDGRTGEFFDNPVTVGKAYILKLVHLVDDKIHARSTGPYSLVTQQPLGGRAQHGGQRLGEMEVWALEAFGAAYTLQELLTVKSDDMQGRNDALNAIVKGKPIPKPGTPESFKVLMRELQSLALDIAVHKLELLDNGNKASIEIDLMSDEQVSAI.

Belongs to the RNA polymerase beta chain family. As to quaternary structure, in plastids the minimal PEP RNA polymerase catalytic core is composed of four subunits: alpha, beta, beta', and beta''. When a (nuclear-encoded) sigma factor is associated with the core the holoenzyme is formed, which can initiate transcription.

The protein resides in the plastid. Its subcellular location is the chloroplast. It catalyses the reaction RNA(n) + a ribonucleoside 5'-triphosphate = RNA(n+1) + diphosphate. In terms of biological role, DNA-dependent RNA polymerase catalyzes the transcription of DNA into RNA using the four ribonucleoside triphosphates as substrates. The chain is DNA-directed RNA polymerase subunit beta from Gracilaria tenuistipitata var. liui (Red alga).